The primary structure comprises 115 residues: MYNKHHKTLKLHIKKGDTVQVLSGNYRKKQGTVLKVFPKTYRAIVEGVHIVSKHKKPTAKNPQGTIEKVEAPIHISNLMLIESATSRPTRIGRKLDEEGKLQRYSKKTGEFIKNG.

This sequence belongs to the universal ribosomal protein uL24 family. In terms of assembly, part of the 50S ribosomal subunit.

In terms of biological role, one of two assembly initiator proteins, it binds directly to the 5'-end of the 23S rRNA, where it nucleates assembly of the 50S subunit. Its function is as follows. One of the proteins that surrounds the polypeptide exit tunnel on the outside of the subunit. This Amoebophilus asiaticus (strain 5a2) protein is Large ribosomal subunit protein uL24.